A 158-amino-acid polypeptide reads, in one-letter code: UPF0260 protein RL1394 (158 aa).

Belongs to the UPF0260 family.

This Rhizobium johnstonii (strain DSM 114642 / LMG 32736 / 3841) (Rhizobium leguminosarum bv. viciae) protein is UPF0260 protein RL1394.